A 104-amino-acid chain; its full sequence is Small ribosomal subunit protein uS10 (104 aa).

Belongs to the universal ribosomal protein uS10 family. Part of the 30S ribosomal subunit.

Functionally, involved in the binding of tRNA to the ribosomes. This Nitrosococcus oceani (strain ATCC 19707 / BCRC 17464 / JCM 30415 / NCIMB 11848 / C-107) protein is Small ribosomal subunit protein uS10.